A 181-amino-acid chain; its full sequence is Sporozoite-associated mosquito saliva protein 1 (181 aa).

The signal sequence occupies residues Met-1–Ala-24.

As to expression, salivary gland (at protein level). In terms of tissue distribution, (Microbial infection) Detected with Plasmodium berghei sporozoites isolated from the saliva of infected Anopheles gambiae mosquitoes (at protein level).

The protein localises to the secreted. Functionally, decreases host neutrophil chemotaxis induced by N-formylmethionine-leucyl-phenylalanine (fMLP). In terms of biological role, (Microbial infection) Interacts with the surface of Plasmodium berghei sporozoites. Enhances sporozoite gliding activity. Enhances host hepatocyte traversal by sporozoites. The chain is Sporozoite-associated mosquito saliva protein 1 from Anopheles gambiae (African malaria mosquito).